A 47-amino-acid polypeptide reads, in one-letter code: Trifunctional NAD biosynthesis/regulator protein NadR (47 aa).

Positions 7–47 constitute an HTH cro/C1-type domain; it reads LKSAIKQKGCTLDEVAEPSGMTKGYLSQLLNRKIKARARRS. Residues 18–37 constitute a DNA-binding region (H-T-H motif); sequence LDEVAEPSGMTKGYLSQLLN.

The protein resides in the cell membrane. It localises to the cytoplasm. It catalyses the reaction beta-nicotinamide D-ribonucleotide + ATP + H(+) = diphosphate + NAD(+). It carries out the reaction beta-nicotinamide D-riboside + ATP = beta-nicotinamide D-ribonucleotide + ADP + H(+). It participates in cofactor biosynthesis; NAD(+) biosynthesis [regulation]. The protein operates within cofactor biosynthesis; NAD(+) biosynthesis; NAD(+) from nicotinamide D-ribonucleotide: step 1/1. Functionally, this enzyme has three activities: DNA binding, nicotinamide mononucleotide (NMN) adenylyltransferase and ribosylnicotinamide (RN) kinase. The DNA-binding domain binds to the nadB operator sequence in an NAD- and ATP-dependent manner. As NAD levels increase within the cell, the affinity of NadR for the nadB operator regions of nadA, nadB, and pncB increases, repressing the transcription of these genes. The RN kinase activity catalyzes the phosphorylation of RN to form nicotinamide ribonucleotide. The NMN adenylyltransferase activity catalyzes the transfer of the AMP moiety of ATP to nicotinamide ribonucleotide to form NAD(+). The NMN adenylyltransferase domain also functions as the NAD and ATP sensor. This chain is Trifunctional NAD biosynthesis/regulator protein NadR (nadR), found in Klebsiella pneumoniae.